The chain runs to 872 residues: Alanine--tRNA ligase (872 aa).

Positions 567, 571, 669, and 673 each coordinate Zn(2+).

Belongs to the class-II aminoacyl-tRNA synthetase family. Zn(2+) is required as a cofactor.

The protein localises to the cytoplasm. The enzyme catalyses tRNA(Ala) + L-alanine + ATP = L-alanyl-tRNA(Ala) + AMP + diphosphate. Functionally, catalyzes the attachment of alanine to tRNA(Ala) in a two-step reaction: alanine is first activated by ATP to form Ala-AMP and then transferred to the acceptor end of tRNA(Ala). Also edits incorrectly charged Ser-tRNA(Ala) and Gly-tRNA(Ala) via its editing domain. In Streptococcus pyogenes serotype M12 (strain MGAS2096), this protein is Alanine--tRNA ligase.